Consider the following 66-residue polypeptide: Ocellatin-PT2 (66 aa).

Residues 1–22 form the signal peptide; it reads MAFLKKSLFLVLFLGLVSLSIC. Residues 23 to 39 constitute a propeptide that is removed on maturation; sequence DEEKRQDEDDDDDDDEE. Val-66 carries the valine amide modification.

As to expression, expressed by the skin glands.

Its subcellular location is the secreted. Functionally, has no antibacterial activity against Gram-negative bacteria E.coli ATCC 25922, S.pneumoniae ATCC 700603 and S.choleraesuis ATCC 14028 or against Gram-positive bacterium S.aureus ATCC 29313. Shows no hemolytic activity and no cytotoxicity. The protein is Ocellatin-PT2 of Leptodactylus pustulatus (Ceara white-lipped frog).